A 693-amino-acid polypeptide reads, in one-letter code: MENMAEEELLPLEKEEVEVAQVQVQVPSLASAPEEAKSKRHISIQRQLADLEKLAFVTEGNFDSTSSLNSDNLDAGNRQACPLCPKEKFRACNSHKLRRHLQNLHWKVSVEFEGYRMCICHLPCRPVKPNIIGEQISSKMGAHYHCIICSATITRRTDMLGHVRRHMNKGETKSSYIAASTAKPPKEILKEADTDVQVCPNYSIPQKTDSYFNPKMKLNRQLIFCTLAALAEERKPLECLDAFGATGIMGLQWAKHLGNAVKVTINDLNENSVTLIQENCYLNKLKVVVDSKEKEKSDDILEEGEKNIGNIKVTKMDANVLMHLRSFDFIHLDPFGTSVNYLDSAFRNIRNLGIVSVTSTDISSLYAKAQHVARRHYGCNIVRTEYYKELAARIVVAAVARAAARCNKGIEVLFAVALEHFVLVVVRVLRGPTSADETAKKIQYLIHCQWCEERIFQKDGNMVEENPYRQLPCNCHGSMPGKTAIELGPLWSSSLFNTGFLKRMLFESLHHGLDDIQTLIKTLIFESECTPQSQFSIHTPSNLNKQEENGVFIKTTDDTITDNYIAQGKRKSNEMITNLGKKQKTDVSTEHPPFYYNIHRHSIKGMNMPKLKKFLCYLSQAGFRVSRTHFDPMGVRTDAPLMQFKSILLKYSTPTYTGGQSESLVQSASEDTVTERVEMSVNDKAEASGCRRW.

The Nucleolar localization signal signature appears at 95–99 (HKLRR). The C2H2-type zinc finger occupies 144-166 (YHCIICSATITRRTDMLGHVRRH). The Trm1 methyltransferase domain maps to 187-648 (EILKEADTDV…APLMQFKSIL (462 aa)). Residues Arg-220, Asp-267, Asp-317, and Ala-318 each coordinate S-adenosyl-L-methionine. Zn(2+) contacts are provided by Cys-448, Cys-451, Cys-473, and Cys-475. A Glycyl lysine isopeptide (Lys-Gly) (interchain with G-Cter in SUMO2) cross-link involves residue Lys-545. Phosphoserine is present on residues Ser-572 and Ser-667.

The protein belongs to the class I-like SAM-binding methyltransferase superfamily. Trm1 family.

It is found in the nucleus. It localises to the nucleolus. The catalysed reaction is guanosine(27) in tRNA(Tyr) + 2 S-adenosyl-L-methionine = N(2)-dimethylguanosine(27) in tRNA(Tyr) + 2 S-adenosyl-L-homocysteine + 2 H(+). In terms of biological role, specifically dimethylates a single guanine residue at position 27 of tRNA(Tyr) using S-adenosyl-L-methionine as donor of the methyl groups. Dimethylation at position 27 of tRNA(Tyr) is required for efficient translation of tyrosine codons. Also required to maintain 3-(3-amino-3-carboxypropyl)uridine (acp3U) in the D-loop of several cytoplasmic tRNAs. This chain is tRNA (guanine(27)-N(2))-dimethyltransferase (TRMT1L), found in Macaca fascicularis (Crab-eating macaque).